A 229-amino-acid chain; its full sequence is DNA mismatch repair protein MutH (229 aa).

Belongs to the MutH family.

It is found in the cytoplasm. Functionally, sequence-specific endonuclease that cleaves unmethylated GATC sequences. It is involved in DNA mismatch repair. The sequence is that of DNA mismatch repair protein MutH from Shigella dysenteriae serotype 1 (strain Sd197).